The sequence spans 308 residues: F-actin-capping protein subunit alpha (308 aa).

This sequence belongs to the F-actin-capping protein alpha subunit family. Component of the F-actin capping complex, composed of a heterodimer of an alpha and a beta subunit.

Its function is as follows. F-actin-capping proteins bind in a Ca(2+)-independent manner to the fast growing ends of actin filaments (barbed end) thereby blocking the exchange of subunits at these ends. Unlike other capping proteins (such as gelsolin and severin), these proteins do not sever actin filaments. The sequence is that of F-actin-capping protein subunit alpha from Arabidopsis thaliana (Mouse-ear cress).